The primary structure comprises 467 residues: MDIKEDDESRVITPTELQLHDSVTARTGTLWTAVAHIITGVIGAGVLSLAWATAELGWIAGPAALIAFAGVTLLSAFLLSDCYRFPDPNNGPLRLNSYSQAVKLYLGKKNEIVCGVVVYISLFGCGIAYTIVIATCSRAIMKSNCYHRNGHNATCSYGDNNNYFMVLFGLTQIFMSQIPNFHNMVWLSLVAAIMSFTYSFIGIGLALGKIIENRKIEGSIRGIPAENRGEKVWIVFQALGNIAFSYPFSIILLEIQDTLRSPPAEKQTMKKASTVAVFIQTFFFFCCGCFGYAAFGDSTPGNLLTGFGFYEPFWLVDFANACIVLHLVGGYQVYSQPIFAAAERSLTKKYPENKFIARFYGFKLPLLRGETVRLNPMRMCLRTMYVLITTGVAVMFPYFNEVLGVVGALAFWPLAVYFPVEMCILQKKIRSWTRPWLLLRGFSFVCLLVCLLSLVGSIYGLVGAKFG.

Topologically, residues 1-29 (MDIKEDDESRVITPTELQLHDSVTARTGT) are cytoplasmic. A helical membrane pass occupies residues 30–50 (LWTAVAHIITGVIGAGVLSLA). The Extracellular segment spans residues 51 to 58 (WATAELGW). A helical membrane pass occupies residues 59 to 79 (IAGPAALIAFAGVTLLSAFLL). Residues 80-111 (SDCYRFPDPNNGPLRLNSYSQAVKLYLGKKNE) are Cytoplasmic-facing. The helical transmembrane segment at 112-132 (IVCGVVVYISLFGCGIAYTIV) threads the bilayer. Over 133 to 163 (IATCSRAIMKSNCYHRNGHNATCSYGDNNNY) the chain is Extracellular. 2 helical membrane passes run 164 to 184 (FMVL…FHNM) and 185 to 205 (VWLS…GIGL). The Extracellular portion of the chain corresponds to 206-231 (ALGKIIENRKIEGSIRGIPAENRGEK). A helical membrane pass occupies residues 232-252 (VWIVFQALGNIAFSYPFSIIL). Over 253–274 (LEIQDTLRSPPAEKQTMKKAST) the chain is Cytoplasmic. The helical transmembrane segment at 275–295 (VAVFIQTFFFFCCGCFGYAAF) threads the bilayer. Topologically, residues 296-312 (GDSTPGNLLTGFGFYEP) are extracellular. Residues 313–333 (FWLVDFANACIVLHLVGGYQV) form a helical membrane-spanning segment. Residues 334–383 (YSQPIFAAAERSLTKKYPENKFIARFYGFKLPLLRGETVRLNPMRMCLRT) are Cytoplasmic-facing. The next 2 membrane-spanning stretches (helical) occupy residues 384 to 404 (MYVL…EVLG) and 405 to 425 (VVGA…MCIL). The Cytoplasmic portion of the chain corresponds to 426-443 (QKKIRSWTRPWLLLRGFS). A helical membrane pass occupies residues 444-464 (FVCLLVCLLSLVGSIYGLVGA). The Extracellular portion of the chain corresponds to 465–467 (KFG).

It belongs to the amino acid/polyamine transporter 2 family. Amino acid/auxin permease (AAAP) (TC 2.A.18.2) subfamily.

The protein localises to the cell membrane. In terms of biological role, amino acid-proton symporter. Stereospecific transporter with a broad specificity for neutral amino acids. This Arabidopsis thaliana (Mouse-ear cress) protein is Probable amino acid permease 7 (AAP7).